An 87-amino-acid polypeptide reads, in one-letter code: Apolipoprotein C-I (87 aa).

Residues 1–26 (MRLFLSLPVLVVVLAMVLEGPAPAQA) form the signal peptide.

The protein belongs to the apolipoprotein C1 family.

The protein localises to the secreted. Functionally, inhibitor of lipoprotein binding to the low density lipoprotein (LDL) receptor, LDL receptor-related protein, and very low density lipoprotein (VLDL) receptor. Associates with high density lipoproteins (HDL) and the triacylglycerol-rich lipoproteins in the plasma and makes up about 10% of the protein of the VLDL and 2% of that of HDL. Appears to interfere directly with fatty acid uptake and is also the major plasma inhibitor of cholesteryl ester transfer protein (CETP). Binds free fatty acids and reduces their intracellular esterification. Modulates the interaction of APOE with beta-migrating VLDL and inhibits binding of beta-VLDL to the LDL receptor-related protein. This is Apolipoprotein C-I (APOC1) from Zalophus californianus (California sealion).